We begin with the raw amino-acid sequence, 814 residues long: Echinoderm microtubule-associated protein-like 1 (814 aa).

Residues 31–72 (SMEISDRIASLEQRVQMQEDDIQLLKSALADVVRRLNITEEQ) are a coiled coil. The interval 77 to 185 (NRKGPTKARP…EPTFSPEEGY (109 aa)) is disordered. The segment covering 92-101 (PLRTTVNNGT) has biased composition (polar residues). The segment covering 103-115 (LPKKPSASLPSPS) has biased composition (low complexity). Ser113 carries the phosphoserine modification. Positions 127-137 (KSINRTSSSER) are enriched in polar residues. Basic and acidic residues predominate over residues 142–152 (GRRESSGDSKG). The span at 155-167 (NRTGSTSSSSSGK) shows a compositional bias: low complexity. The segment at 175-814 (KEPTFSPEEG…DTSIMQWRVI (640 aa)) is tandem atypical propeller in EMLs. 12 WD repeats span residues 260-309 (EQLQ…IWDS), 314-357 (TLHV…VWDW), 362-399 (RLAD…FWTL), 408-445 (QGLF…VWGK), 449-488 (RISY…SWNG), 492-529 (KLHK…LQGT), 534-571 (FTPI…LWDA), 577-612 (VWDK…VFDT), 616-654 (DLVT…IYGV), 663-700 (RVGK…YWVP), 708-767 (SVET…LFSY), and 774-813 (APSH…QWRV).

This sequence belongs to the WD repeat EMAP family. In terms of assembly, homotrimer; self-association is mediated by the N-terminal coiled coil. Does not interact with EML3. Binds repolymerizing microtubules. Binds unpolymerized tubulins via its WD repeat region. Interacts with TASOR.

The protein localises to the cytoplasm. Its subcellular location is the perinuclear region. It localises to the cytoskeleton. Modulates the assembly and organization of the microtubule cytoskeleton, and probably plays a role in regulating the orientation of the mitotic spindle and the orientation of the plane of cell division. Required for normal proliferation of neuronal progenitor cells in the developing brain and for normal brain development. Does not affect neuron migration per se. The chain is Echinoderm microtubule-associated protein-like 1 (Eml1) from Rattus norvegicus (Rat).